The primary structure comprises 78 residues: Acyl carrier protein (78 aa).

Residues 2 to 77 enclose the Carrier domain; it reads SNFEERVKKI…AAIDYVVSSA (76 aa). The residue at position 37 (serine 37) is an O-(pantetheine 4'-phosphoryl)serine.

The protein belongs to the acyl carrier protein (ACP) family. In terms of processing, 4'-phosphopantetheine is transferred from CoA to a specific serine of apo-ACP by AcpS. This modification is essential for activity because fatty acids are bound in thioester linkage to the sulfhydryl of the prosthetic group.

The protein localises to the cytoplasm. It functions in the pathway lipid metabolism; fatty acid biosynthesis. Carrier of the growing fatty acid chain in fatty acid biosynthesis. Is probably involved in the biosynthesis of docosahexaenoic acid (DHA) which is produced by this bacterium as a fatty acyl component in its membrane lipid. This is Acyl carrier protein from Moritella marina (Vibrio marinus).